Consider the following 354-residue polypeptide: Uroporphyrinogen decarboxylase (354 aa).

Substrate is bound by residues 27–31 (RQAGR), aspartate 77, tyrosine 154, threonine 209, and histidine 327.

This sequence belongs to the uroporphyrinogen decarboxylase family. As to quaternary structure, homodimer.

Its subcellular location is the cytoplasm. It catalyses the reaction uroporphyrinogen III + 4 H(+) = coproporphyrinogen III + 4 CO2. Its pathway is porphyrin-containing compound metabolism; protoporphyrin-IX biosynthesis; coproporphyrinogen-III from 5-aminolevulinate: step 4/4. Catalyzes the decarboxylation of four acetate groups of uroporphyrinogen-III to yield coproporphyrinogen-III. This chain is Uroporphyrinogen decarboxylase, found in Escherichia coli O17:K52:H18 (strain UMN026 / ExPEC).